A 500-amino-acid chain; its full sequence is Cytochrome P450 2D3 (500 aa).

A heme-binding site is contributed by Cys-446.

It belongs to the cytochrome P450 family. The cofactor is heme.

It localises to the endoplasmic reticulum membrane. The protein localises to the microsome membrane. The enzyme catalyses an organic molecule + reduced [NADPH--hemoprotein reductase] + O2 = an alcohol + oxidized [NADPH--hemoprotein reductase] + H2O + H(+). Cytochromes P450 are a group of heme-thiolate monooxygenases. In liver microsomes, this enzyme is involved in an NADPH-dependent electron transport pathway. It oxidizes a variety of structurally unrelated compounds, including steroids, fatty acids, and xenobiotics. The sequence is that of Cytochrome P450 2D3 (Cyp2d3) from Rattus norvegicus (Rat).